Here is a 73-residue protein sequence, read N- to C-terminus: UPF0346 protein SSP1318 (73 aa).

It belongs to the UPF0346 family.

The polypeptide is UPF0346 protein SSP1318 (Staphylococcus saprophyticus subsp. saprophyticus (strain ATCC 15305 / DSM 20229 / NCIMB 8711 / NCTC 7292 / S-41)).